We begin with the raw amino-acid sequence, 834 residues long: Putative COX1/OXI3 intron 1 protein (834 aa).

The tract at residues 162–188 is disordered; sequence MKDTNNTKGNTKSEGSTERGNSGVDRG. Residues 167–181 are compositionally biased toward polar residues; the sequence is NTKGNTKSEGSTERG. The Reverse transcriptase domain maps to 296–577; it reads LSNELGTGKF…TPARFLGYNI (282 aa).

Its subcellular location is the mitochondrion. This is Putative COX1/OXI3 intron 1 protein (AI1) from Saccharomyces cerevisiae (strain ATCC 204508 / S288c) (Baker's yeast).